The sequence spans 1512 residues: Zinc finger protein 608 (1512 aa).

Disordered stretches follow at residues 1 to 23 (MSVN…YDSG), 46 to 74 (QKFE…SGAG), 89 to 237 (QASA…HLYG), 260 to 295 (VAAA…HRRI), and 417 to 545 (RFCE…FLDQ). 2 stretches are compositionally biased toward low complexity: residues 51-74 (NNST…SGAG) and 151-185 (SALG…GSCG). Over residues 201–218 (AKRDKDAGKSRKDKHDLL) the composition is skewed to basic and acidic residues. The span at 220–230 (GHQNGSGSQAP) shows a compositional bias: polar residues. A compositionally biased stretch (low complexity) spans 260-270 (VAAAGEVSKSA). Positions 278 to 304 (NSMLVKKEEEEEESHRRIKKLKTEKVD) form a coiled coil. K283 participates in a covalent cross-link: Glycyl lysine isopeptide (Lys-Gly) (interchain with G-Cter in SUMO2). Phosphoserine is present on residues S421 and S424. Over residues 449 to 458 (ASFTESRGLQ) the composition is skewed to polar residues. T481 carries the post-translational modification Phosphothreonine. Phosphoserine is present on S493. Positions 526 to 535 (NSRSTPTTPQ) are enriched in polar residues. The C2H2-type zinc finger occupies 553–578 (IDCPHPNCNKKYKHINGLRYHQAHAH). Disordered stretches follow at residues 622 to 665 (LKAP…KKKG), 713 to 750 (DKEK…PQLI), and 777 to 858 (QATP…KDHL). A Phosphoserine modification is found at S627. The segment covering 713-729 (DKEKGKKATNCKTDKNL) has biased composition (basic and acidic residues). The segment covering 781 to 790 (KSPPLKPIQP) has biased composition (pro residues). S782 carries the phosphoserine modification. A compositionally biased stretch (basic and acidic residues) spans 818 to 858 (KLKDKEGKETGSPKMDAKLGKLEDSKGASKDLPGHFLKDHL). A Glycyl lysine isopeptide (Lys-Gly) (interchain with G-Cter in SUMO2) cross-link involves residue K880. The residue at position 895 (S895) is a Phosphoserine. The segment covering 925–934 (NGAESSAAKT) has biased composition (polar residues). Disordered regions lie at residues 925–996 (NGAE…HSPY) and 1011–1066 (PGQV…HQSV). Over residues 960–973 (SKASSPSDIISSKD) the composition is skewed to low complexity. S964 bears the Phosphoserine mark. Over residues 979–989 (HSSTTAQSSQL) the composition is skewed to polar residues. Residues 1030–1054 (IKKESEEDAEKKDKAEQLDSKKVDH) show a composition bias toward basic and acidic residues. Residues 1055 to 1066 (NSASLQPQHQSV) show a composition bias toward polar residues. Position 1098 is a phosphoserine (S1098). Positions 1117–1192 (QKMAQTGRGD…SQLLSNHQQQ (76 aa)) are disordered. K1118 participates in a covalent cross-link: Glycyl lysine isopeptide (Lys-Gly) (interchain with G-Cter in SUMO2). Over residues 1125 to 1145 (GDCERKSELPLKELGKEETKQ) the composition is skewed to basic and acidic residues. Positions 1146–1157 (KNMPSATISKAP) are enriched in polar residues. Residues K1176 and K1182 each participate in a glycyl lysine isopeptide (Lys-Gly) (interchain with G-Cter in SUMO2) cross-link. Over residues 1183 to 1192 (SQLLSNHQQQ) the composition is skewed to low complexity. Residues K1199, K1216, K1234, and K1250 each participate in a glycyl lysine isopeptide (Lys-Gly) (interchain with G-Cter in SUMO2) cross-link. The segment at 1220-1335 (DSMKQTGVDP…RGTRVAVSSP (116 aa)) is disordered. The segment covering 1231 to 1241 (SRFKQDPDSRT) has biased composition (basic and acidic residues). 2 stretches are compositionally biased toward basic and acidic residues: residues 1253–1276 (DQQK…KTPN) and 1291–1327 (IKEE…DSRG). Residues K1292, K1310, and K1414 each participate in a glycyl lysine isopeptide (Lys-Gly) (interchain with G-Cter in SUMO2) cross-link. A disordered region spans residues 1423–1459 (ANQYRSKSPAPVEKATAEREREAERERDRHSPFGQRH). Residues 1437-1453 (ATAEREREAERERDRHS) are compositionally biased toward basic and acidic residues.

In terms of biological role, transcription factor, which represses ZNF609 transcription. The sequence is that of Zinc finger protein 608 (ZNF608) from Homo sapiens (Human).